A 304-amino-acid polypeptide reads, in one-letter code: MVSLISAHLLSLPSSAPRSRPQSRPPLSPPAAAAAASCSFDLPRPRRLVADGSRRKGTMAAAIPPEASGLAHDLGSAAVTAGVALALLRFFEELAKRGVFEQKLNRKLVHITIGMVFLLFWPLFSSGSYAPFLAAVAPGINIIRMLLLGLGVMKNEAMVKSMSRSGDPRELLKGPLYYATTITFATSIFWRTSPIAIALICNLCAGDGIADIVGRRLGQEKLPYNPNKSYAGSIAMALAGFMASIGYMHYFQSFGFIEESWSLAFGFLVVSVTAALVESHPISTHLDDNLTVPLTSFLVGSLVF.

The transit peptide at 1–59 (MVSLISAHLLSLPSSAPRSRPQSRPPLSPPAAAAAASCSFDLPRPRRLVADGSRRKGTM) directs the protein to the chloroplast. A run of 7 helical transmembrane segments spans residues 68–88 (SGLA…LALL), 113–133 (IGMV…APFL), 134–154 (AAVA…GVMK), 170–190 (ELLK…SIFW), 194–214 (PIAI…DIVG), 231–251 (AGSI…MHYF), and 256–276 (FIEE…TAAL).

This sequence belongs to the polyprenol kinase family.

It is found in the plastid. It localises to the chloroplast membrane. The catalysed reaction is phytol + CTP = phytyl phosphate + CDP + H(+). The protein operates within cofactor biosynthesis; tocopherol biosynthesis. Involved in the activation and reutilization of phytol from chlorophyll degradation in plant metabolism, including tocopherol biosynthesis. Catalyzes the conversion of phytol to phytol monophosphate (PMP). The protein is Probable phytol kinase 2, chloroplastic of Oryza sativa subsp. japonica (Rice).